The sequence spans 307 residues: Protoheme IX farnesyltransferase (307 aa).

Transmembrane regions (helical) follow at residues 32–52 (MGIV…ALHF), 65–85 (FFTI…NNYI), 108–128 (PGFA…FLLL), 131–151 (PMAV…YSLW), 158–178 (LNTV…WAAI), 186–206 (IAWM…LALA), 251–271 (LGIT…VLGF), and 287–307 (FVYS…VTFF).

This sequence belongs to the UbiA prenyltransferase family. Protoheme IX farnesyltransferase subfamily. Interacts with CtaA.

It localises to the cell membrane. The enzyme catalyses heme b + (2E,6E)-farnesyl diphosphate + H2O = Fe(II)-heme o + diphosphate. It functions in the pathway porphyrin-containing compound metabolism; heme O biosynthesis; heme O from protoheme: step 1/1. Converts heme B (protoheme IX) to heme O by substitution of the vinyl group on carbon 2 of heme B porphyrin ring with a hydroxyethyl farnesyl side group. The polypeptide is Protoheme IX farnesyltransferase (Bacillus anthracis (strain A0248)).